A 382-amino-acid polypeptide reads, in one-letter code: Gap junction alpha-1 protein (382 aa).

The Cytoplasmic portion of the chain corresponds to 2–23; it reads GDWSALGKLLDKVQAYSTAGGK. The residue at position 5 (serine 5) is a Phosphoserine. Residues 24–44 traverse the membrane as a helical segment; the sequence is VWLSVLFIFRILLLGTAVESA. At 45–76 the chain is on the extracellular side; that stretch reads WGDEQSAFRCNTQQPGCENVCYDKSFPISHVR. Cystine bridges form between cysteine 54–cysteine 192 and cysteine 187–cysteine 198. The chain crosses the membrane as a helical span at residues 77–97; sequence FWVLQIIFVSVPTLLYLAHVF. Over 98-155 the chain is Cytoplasmic; sequence YVMRKEEKLNKKEEELKVAQTDGVNVEMHLKQIEIKKFKYGIEEHGKVKMRGGLLRTY. Lysine 144 is covalently cross-linked (Glycyl lysine isopeptide (Lys-Gly) (interchain with G-Cter in SUMO)). A helical membrane pass occupies residues 156-176; sequence IISILFKSVFEVAFLLIQWYI. At 177–207 the chain is on the extracellular side; that stretch reads YGFSLSAVYTCKRDPCPHQVDCFLSRPTEKT. The helical transmembrane segment at 208–228 threads the bilayer; the sequence is IFIIFMLVVSLVSLALNIIEL. Topologically, residues 229-382 are cytoplasmic; that stretch reads FYVFFKGVKD…SRPRPDDLEI (154 aa). A Glycyl lysine isopeptide (Lys-Gly) (interchain with G-Cter in SUMO) cross-link involves residue lysine 237. The interval 244-382 is interaction with NOV; it reads SDPYHATTGP…SRPRPDDLEI (139 aa). Tyrosine 247 is subject to Phosphotyrosine. 3 positions are modified to phosphoserine: serine 255, serine 257, and serine 262. The tract at residues 264–382 is interaction with UBQLN4; it reads KYAYFNGCSS…SRPRPDDLEI (119 aa). Cysteine 271 carries the S-nitrosocysteine modification. Position 275 is a phosphothreonine (threonine 275). Phosphoserine occurs at positions 306 and 314. The span at 317–332 shows a compositional bias: polar residues; sequence QNRMGQAGSTISNSHA. Residues 317 to 382 form a disordered region; the sequence is QNRMGQAGST…SRPRPDDLEI (66 aa). A Phosphoserine; by CK1 modification is found at serine 325. A Phosphothreonine modification is found at threonine 326. A phosphoserine; by CK1 mark is found at serine 328 and serine 330. 2 positions are modified to phosphoserine: serine 344 and serine 365. The segment covering 362–374 has biased composition (low complexity); it reads RPSSRASSRASSR. Serine 368 is subject to Phosphoserine; by PKC/PRKCG and PKC/PRKCD. Phosphoserine is present on residues serine 369 and serine 373.

The protein belongs to the connexin family. Alpha-type (group II) subfamily. A connexon is composed of a hexamer of connexins. Interacts with SGSM3. Interacts with RIC1/CIP150. Interacts with CNST and CSNK1D. Interacts (via C-terminus) with TJP1. Interacts (via C-terminus) with SRC (via SH3 domain). Interacts (not ubiquitinated) with UBQLN4 (via UBA domain). Interacts with NOV. Interacts with TMEM65. Interacts with ANK3/ANKG and PKP2. Post-translationally, phosphorylation at Ser-325, Ser-328 and Ser-330 by CK1 modulates gap junction assembly. Phosphorylated at Ser-368 by PRKCG; phosphorylation induces disassembly of gap junction plaques and inhibition of gap junction activity. Phosphorylation at Ser-368 by PRKCD triggers its internalization into small vesicles leading to proteasome-mediated degradation. Sumoylated with SUMO1, SUMO2 and SUMO3, which may regulate the level of functional Cx43 gap junctions at the plasma membrane. May be desumoylated by SENP1 or SENP2. In terms of processing, S-nitrosylation at Cys-271 is enriched at the muscle endothelial gap junction in arteries, it augments channel permeability and may regulate of smooth muscle cell to endothelial cell communication. Post-translationally, acetylated in the developing cortex; leading to delocalization from the cell membrane.

Its subcellular location is the cell membrane. The protein resides in the cell junction. It localises to the gap junction. The protein localises to the endoplasmic reticulum. Functionally, gap junction protein that acts as a regulator of bladder capacity. A gap junction consists of a cluster of closely packed pairs of transmembrane channels, the connexons, through which materials of low MW diffuse from one cell to a neighboring cell. May play a critical role in the physiology of hearing by participating in the recycling of potassium to the cochlear endolymph. Negative regulator of bladder functional capacity: acts by enhancing intercellular electrical and chemical transmission, thus sensitizing bladder muscles to cholinergic neural stimuli and causing them to contract. May play a role in cell growth inhibition through the regulation of NOV expression and localization. Plays an essential role in gap junction communication in the ventricles. The protein is Gap junction alpha-1 protein (GJA1) of Ursus americanus (American black bear).